The primary structure comprises 95 residues: Protein TusB (95 aa).

It belongs to the DsrH/TusB family. In terms of assembly, heterohexamer, formed by a dimer of trimers. The hexameric TusBCD complex contains 2 copies each of TusB, TusC and TusD. The TusBCD complex interacts with TusE.

It is found in the cytoplasm. Functionally, part of a sulfur-relay system required for 2-thiolation of 5-methylaminomethyl-2-thiouridine (mnm(5)s(2)U) at tRNA wobble positions. In Yersinia enterocolitica serotype O:8 / biotype 1B (strain NCTC 13174 / 8081), this protein is Protein TusB.